Reading from the N-terminus, the 26-residue chain is Oxyopinin-3b (26 aa).

In terms of tissue distribution, expressed by the venom gland.

The protein localises to the secreted. May have cytolytic and antimicrobial activity. This chain is Oxyopinin-3b, found in Oxyopes takobius (Lynx spider).